The chain runs to 471 residues: DnaJ protein P58IPK homolog B (471 aa).

The N-terminal stretch at 1–24 (MARWPWRWRVLLPLLLLHSSPVFA) is a signal peptide. 8 TPR repeats span residues 32–65 (PSTL…DPNH), 66–99 (SEAY…KPGS), 112–146 (AQNA…SPNC), 148–180 (KAKL…DEDN), 181–214 (LDAL…DPEH), 227–260 (LLKK…DPDH), 265–298 (VHLY…DGEL), and 300–332 (DALT…SPQD). Asparagine 64 carries N-linked (GlcNAc...) asparagine glycosylation. The J domain occupies 353–419 (DWYKILGISK…DKRVRYDRGE (67 aa)).

In terms of assembly, interacts with BIP1.

The protein resides in the endoplasmic reticulum lumen. May play a role in protein folding in the endoplasmic reticulum. The polypeptide is DnaJ protein P58IPK homolog B (Oryza sativa subsp. japonica (Rice)).